The chain runs to 876 residues: DNA double-strand break repair Rad50 ATPase (876 aa).

ATP contacts are provided by residues Arg11, 31-37 (NGAGKTT), and Gln139. Coiled coils occupy residues 188-528 (RERV…EDRL) and 575-710 (SGVE…RKER). The region spanning 387–484 (EETLQSEYEE…RLESVRRELE (98 aa)) is the Zinc-hook domain. Zn(2+) contacts are provided by Cys432 and Cys435.

It belongs to the SMC family. RAD50 subfamily. In terms of assembly, homodimer. Forms a heterotetramer composed of two Mre11 subunits and two Rad50 subunits. Zn(2+) is required as a cofactor.

In terms of biological role, part of the Rad50/Mre11 complex, which is involved in the early steps of DNA double-strand break (DSB) repair. The complex may facilitate opening of the processed DNA ends to aid in the recruitment of HerA and NurA. Rad50 controls the balance between DNA end bridging and DNA resection via ATP-dependent structural rearrangements of the Rad50/Mre11 complex. The chain is DNA double-strand break repair Rad50 ATPase from Methanopyrus kandleri (strain AV19 / DSM 6324 / JCM 9639 / NBRC 100938).